The sequence spans 258 residues: Shikimate dehydrogenase (NADP(+)) (258 aa).

Shikimate contacts are provided by residues serine 14 to serine 16 and threonine 61. Lysine 65 serves as the catalytic Proton acceptor. Residues asparagine 86 and aspartate 101 each coordinate shikimate. Residues glycine 125–serine 129 and leucine 211 contribute to the NADP(+) site. Tyrosine 213 lines the shikimate pocket. An NADP(+)-binding site is contributed by glycine 234.

This sequence belongs to the shikimate dehydrogenase family. In terms of assembly, homodimer.

It catalyses the reaction shikimate + NADP(+) = 3-dehydroshikimate + NADPH + H(+). It participates in metabolic intermediate biosynthesis; chorismate biosynthesis; chorismate from D-erythrose 4-phosphate and phosphoenolpyruvate: step 4/7. Functionally, involved in the biosynthesis of the chorismate, which leads to the biosynthesis of aromatic amino acids. Catalyzes the reversible NADPH linked reduction of 3-dehydroshikimate (DHSA) to yield shikimate (SA). The protein is Shikimate dehydrogenase (NADP(+)) of Clostridium botulinum (strain ATCC 19397 / Type A).